The following is a 430-amino-acid chain: Lipoyl synthase, chloroplastic (430 aa).

The segment covering Met-1–Arg-16 has biased composition (polar residues). A chloroplast-targeting transit peptide spans Met-1–Arg-40. 2 disordered regions span residues Met-1 to Val-55 and His-85 to Ala-119. Positions Lys-91–Ala-119 are enriched in low complexity. The [4Fe-4S] cluster site is built by Cys-155, Cys-160, Cys-166, Cys-183, Cys-187, Cys-190, and Ser-397. In terms of domain architecture, Radical SAM core spans Cys-166–Arg-386.

This sequence belongs to the radical SAM superfamily. Lipoyl synthase family. The cofactor is [4Fe-4S] cluster.

The protein resides in the plastid. It localises to the chloroplast. It catalyses the reaction [[Fe-S] cluster scaffold protein carrying a second [4Fe-4S](2+) cluster] + N(6)-octanoyl-L-lysyl-[protein] + 2 oxidized [2Fe-2S]-[ferredoxin] + 2 S-adenosyl-L-methionine + 4 H(+) = [[Fe-S] cluster scaffold protein] + N(6)-[(R)-dihydrolipoyl]-L-lysyl-[protein] + 4 Fe(3+) + 2 hydrogen sulfide + 2 5'-deoxyadenosine + 2 L-methionine + 2 reduced [2Fe-2S]-[ferredoxin]. The protein operates within protein modification; protein lipoylation via endogenous pathway; protein N(6)-(lipoyl)lysine from octanoyl-[acyl-carrier-protein]: step 2/2. Its function is as follows. Catalyzes the radical-mediated insertion of two sulfur atoms into the C-6 and C-8 positions of the octanoyl moiety bound to the lipoyl domains of lipoate-dependent enzymes, thereby converting the octanoylated domains into lipoylated derivatives. The chain is Lipoyl synthase, chloroplastic from Chlamydomonas reinhardtii (Chlamydomonas smithii).